The primary structure comprises 496 residues: Alanine aminotransferase 1 (496 aa).

At Ala2 the chain carries N-acetylalanine. At Thr22 the chain carries Phosphothreonine. Position 314 is an N6-(pyridoxal phosphate)lysine (Lys314).

It belongs to the class-I pyridoxal-phosphate-dependent aminotransferase family. Alanine aminotransferase subfamily. In terms of assembly, homodimer. Pyridoxal 5'-phosphate serves as cofactor. In terms of tissue distribution, mainly expressed in liver, intestine, colon and white adipose tissue.

The protein localises to the cytoplasm. It carries out the reaction L-alanine + 2-oxoglutarate = pyruvate + L-glutamate. The protein operates within amino-acid degradation; L-alanine degradation via transaminase pathway; pyruvate from L-alanine: step 1/1. Functionally, catalyzes the reversible transamination between alanine and 2-oxoglutarate to form pyruvate and glutamate. Participates in cellular nitrogen metabolism and also in liver gluconeogenesis starting with precursors transported from skeletal muscles. This chain is Alanine aminotransferase 1 (Gpt), found in Mus musculus (Mouse).